Consider the following 677-residue polypeptide: Beta-galactosidase BgaA (677 aa).

A substrate-binding site is contributed by Arg-112. A Zn(2+)-binding site is contributed by Cys-116. Residue Asn-150 participates in substrate binding. Glu-151 serves as the catalytic Proton donor. The Zn(2+) site is built by Cys-156, Cys-158, and Cys-161. The active-site Nucleophile is the Glu-309. Substrate-binding positions include Trp-317 and 357–360 (EKYH).

This sequence belongs to the glycosyl hydrolase 42 family. Dimer.

The enzyme catalyses Hydrolysis of terminal non-reducing beta-D-galactose residues in beta-D-galactosides.. With respect to regulation, no activity is lost during treatment with 20 or 100 mM EDTA in Z buffer for 3 hours at 0 degrees Celsius, nor is activity greatly stimulated by the addition of cations. Inhibited by 1 mM zinc and 1 mM copper, the levels of activity decrease to 10% of the untreated control. Nickel, cobalt and manganese at concentrations of 10 mM decrease enzyme activity to either 40% (for nickel and cobalt) or 60% (for manganese) of the activity in untreated controls. No change in enzyme activity in the presence of calcium and magnesium at concentrations up to 50 mM. EDTA-treated enzyme exhibits a slight increase in relative specific activity when it is assayed in the presence of 50 mM NaCl or 50 mM KCl, it does not exhibit enhanced activity at concentrations greater than 250 mM. Maintains between 20 and 40% of activity in the presence of 4 M NaCl or 4 M KCl, and it is more active in the presence of KCl than in the presence of NaCl. Retains 50% of activity in the presence of 3 M KCl or 2.5 M NaCl. In terms of biological role, hydrolyzes o-nitrophenyl-beta-D-galactopyranoside (ONPG), p-nitrophenyl-beta-D-galactopyranoside (PNPG), 5-bromo-4-chloro-3-indoyl-beta-D-galactosde (X-gal), o-nitrophenyl-beta-D-fucopyranoside (ONPF) and p-nitrophenyl-beta-D-fucopyranoside (PNPF) with greatest activity towards ONPG and PNPG and low levels of activity with ONPF and PNPF. Detectable, but very low levels of activity towards p-nitrophenyl-beta-lactose (PNPL), p-nitrophenyl-beta-cellobiose (PNPC), p-nitrophenyl-alpha-galactopyranoside (PNP-alpha-G), and p-nitrophenyl-beta-xylopyranoside (PNPX). This chain is Beta-galactosidase BgaA, found in Planococcus sp. (strain 'SOS Orange').